The following is a 74-amino-acid chain: DNA-directed RNA polymerase subunit omega (74 aa).

It belongs to the RNA polymerase subunit omega family. As to quaternary structure, the RNAP catalytic core consists of 2 alpha, 1 beta, 1 beta' and 1 omega subunit. When a sigma factor is associated with the core the holoenzyme is formed, which can initiate transcription.

The catalysed reaction is RNA(n) + a ribonucleoside 5'-triphosphate = RNA(n+1) + diphosphate. In terms of biological role, promotes RNA polymerase assembly. Latches the N- and C-terminal regions of the beta' subunit thereby facilitating its interaction with the beta and alpha subunits. The sequence is that of DNA-directed RNA polymerase subunit omega from Helicobacter pylori (strain Shi470).